The chain runs to 329 residues: Chloroplast envelope quinone oxidoreductase homolog (329 aa).

Substrate is bound at residue R58.

The protein belongs to the zinc-containing alcohol dehydrogenase family. Quinone oxidoreductase subfamily. In terms of assembly, homodimer or homotetramer. Transition to monomer upon NADPH binding. Interacts with calmodulin. Interacts with HP30-1, HP30-2 and HP20.

Its subcellular location is the plastid. It is found in the chloroplast inner membrane. Its function is as follows. NADPH-dependent alpha,beta-unsaturated oxoene reductase reducing the double bond of medium-chain (C9) to long-chain (C18) reactive electrophile species deriving from poly-unsaturated fatty acid peroxides. The best substrates are 13-lipoxygenase-derived gamma-ketols, but is unable to reduce the double bond of short-chain alkenals and alkenones such as acrolein, crotonaldehyde, 3-buten-2-one, 4-hexen-3-one and trans-2-hexenal, or quinones such as duroquinone, decylubiquinone, coenzyme Q0, menadione, menaquinone and phylloquinone. Can use trans-2-nonenal, trans-3-decen-2-one, 4-hydroxynonenal, 12-oxo-10(E) dodecanoate (traumatin), 4-oxononenal, trans-1,3 diphenyl-2-propenone, trans-1,4-diphenyl-2-butene-1,4-dione, 9-oxo-12,13-epoxy-(10E)-octadecenoic acid (trans-EKODE-1b), 9-hydroxy-12-oxo-10(E)-octadecenoic acid, 9-Hydroxy-12-oxo-10(E),15(Z)-octadecadienoic acid and 9,13-dihydroxy-10-oxo-11-octadecenoic acid as substrates, but has no activity with 13(R,S)-hydroperoxy-9(Z),11(E)-octadecadienoic acid (13-HPOD), 9(S),12(S),13(S)-trihydroxy-10(E)-octadecenoic acid, 13-hydroxy-12-oxo-9(Z)-octadecenoic acid, 9-oxo-10(E),12(Z)-octadecadienoic acid (9-KODE), 13-oxo-9(Z),11(E)-octadecadienoic acid (13-KODE) and 12-oxo-10,15(Z)-phytodienoic acid (12-OPDA). The sequence is that of Chloroplast envelope quinone oxidoreductase homolog from Arabidopsis thaliana (Mouse-ear cress).